The following is a 464-amino-acid chain: Serine protease PepD (464 aa).

The disordered stretch occupies residues 1-71; sequence MAKLARVVGL…TQYRQPYEAL (71 aa). Residues 1 to 100 lie on the Cytoplasmic side of the membrane; the sequence is MAKLARVVGL…GMVRQRPRAG (100 aa). Positions 39-48 are enriched in low complexity; sequence QGQQQTYSQQ. Residues 101-121 traverse the membrane as a helical segment; the sequence is MLAIGAVTIAVVSAGIGGAAA. The Periplasmic portion of the chain corresponds to 122 to 464; that stretch reads SLVGFNRAPA…VQVTLGKAEQ (343 aa). Catalysis depends on charge relay system residues H197, D236, and S317. Residues 368–449 form the PDZ domain; that stretch reads LISTGKASHA…TVALTFQDPS (82 aa).

The protein belongs to the peptidase S1C family. As to quaternary structure, homotrimer. Interacts with numerous proteins, including the 35 kDa antigen PspA.

It is found in the cell inner membrane. The protein resides in the secreted. Its subcellular location is the cell wall. It catalyses the reaction Acts on substrates that are at least partially unfolded. The cleavage site P1 residue is normally between a pair of hydrophobic residues, such as Val-|-Val.. With respect to regulation, probably regulates its own activity by autocleavage, which removes the PDZ domain. Inhibited by the serine protease inhibitor diisopropylfluorophosphate (DFP). Inhibited by fluoroquinolone such as ciprofloxacin, moxifloxacin and ofloxacin and their analogs. Functionally, required for virulence. Acts both as a protease, which degrades and/or refolds damaged substrate targets, and as a chaperone. Plays an important role in the stress response network mediated through the two-component regulatory system MprAB and SigE signaling networks. May utilize its PDZ domain to recognize and process misfolded proteins at the cell membrane, leading to activation of the MprAB and SigE signaling pathways and subsequent establishment of a positive feedback loop that facilitates bacterial adaptation. Interacts with and potentially cleaves several proteins, including the 35 kDa antigen PspA. Proteolytic cleavage of PspA may help to maintain cell envelope homeostasis in Mycobacterium and regulate specific stress response pathways during periods of extracytoplasmic stress. In vitro, exhibits proteolytic activity against the artificial substrate beta-casein. The protein is Serine protease PepD of Mycobacterium tuberculosis (strain ATCC 25618 / H37Rv).